Reading from the N-terminus, the 176-residue chain is Small ribosomal subunit protein uS4 (176 aa).

The S4 RNA-binding domain maps to 104–166 (RRLQTIVYKK…PTSPFKQNPP (63 aa)).

This sequence belongs to the universal ribosomal protein uS4 family. In terms of assembly, part of the 30S ribosomal subunit. Contacts protein S5. The interaction surface between S4 and S5 is involved in control of translational fidelity.

In terms of biological role, one of the primary rRNA binding proteins, it binds directly to 16S rRNA where it nucleates assembly of the body of the 30S subunit. Its function is as follows. With S5 and S12 plays an important role in translational accuracy. This Sulfolobus acidocaldarius (strain ATCC 33909 / DSM 639 / JCM 8929 / NBRC 15157 / NCIMB 11770) protein is Small ribosomal subunit protein uS4 (rps4).